The chain runs to 213 residues: Peptidyl-tRNA hydrolase (213 aa).

Y15 lines the tRNA pocket. Residue H20 is the Proton acceptor of the active site. The tRNA site is built by Y66, N68, and N114. Residues 186-213 (MHAKPPRPKPPRPVTAPGAPVPPTEPSA) are disordered. Positions 196-213 (PRPVTAPGAPVPPTEPSA) are enriched in pro residues.

It belongs to the PTH family. As to quaternary structure, monomer.

The protein resides in the cytoplasm. It catalyses the reaction an N-acyl-L-alpha-aminoacyl-tRNA + H2O = an N-acyl-L-amino acid + a tRNA + H(+). Hydrolyzes ribosome-free peptidyl-tRNAs (with 1 or more amino acids incorporated), which drop off the ribosome during protein synthesis, or as a result of ribosome stalling. In terms of biological role, catalyzes the release of premature peptidyl moieties from peptidyl-tRNA molecules trapped in stalled 50S ribosomal subunits, and thus maintains levels of free tRNAs and 50S ribosomes. The polypeptide is Peptidyl-tRNA hydrolase (Leptothrix cholodnii (strain ATCC 51168 / LMG 8142 / SP-6) (Leptothrix discophora (strain SP-6))).